Here is a 129-residue protein sequence, read N- to C-terminus: Small ribosomal subunit protein uS11 (129 aa).

It belongs to the universal ribosomal protein uS11 family. Part of the 30S ribosomal subunit. Interacts with proteins S7 and S18. Binds to IF-3.

Located on the platform of the 30S subunit, it bridges several disparate RNA helices of the 16S rRNA. Forms part of the Shine-Dalgarno cleft in the 70S ribosome. The chain is Small ribosomal subunit protein uS11 from Geobacillus kaustophilus (strain HTA426).